A 444-amino-acid chain; its full sequence is Maturase K (444 aa).

The protein belongs to the intron maturase 2 family. MatK subfamily.

The protein localises to the plastid. It is found in the chloroplast. In terms of biological role, usually encoded in the trnK tRNA gene intron. Probably assists in splicing its own and other chloroplast group II introns. The protein is Maturase K of Chamaecyparis lawsoniana (Lawson false cypress).